Consider the following 376-residue polypeptide: MTQTWPFLHNAQSFIQENWNASGFQKPTPVQEQAAQLIMDGKDVIAESPTGTGKTLAYALPVLERIKPEQKHPQAVILAPSRELVMQIFQVIQDWKAGSELRAASLIGGANVKKQVEKLKKHPHIIVGTPGRVFELIKAKKLKMHEVKTIVLDETDQLVLPEHRETMKQIIKTTLRDRQLLCFSATLKKETEDVLRELAQEPEVLKVQRSKAEAGKVKHQYLICDQRDKVKLLQKLSRLEGMQALVFVRDIGNLSVYAEKLAYHHVELGVLHSEAKKMERAKIIATFEDGEFPLLLATDIAARGLDIENLPYVIHADIPDEDGYVHRSGRTGRAGKEGNVLSLVTKLEESKLKKMAKKLGVELSEAVYAGGKLKTK.

In terms of domain architecture, Helicase ATP-binding spans 35–205 (AQLIMDGKDV…RELAQEPEVL (171 aa)). 48–55 (SPTGTGKT) is a binding site for ATP. The DEAD box motif lies at 153-156 (DETD). One can recognise a Helicase C-terminal domain in the interval 231–374 (KLLQKLSRLE…EAVYAGGKLK (144 aa)).

This sequence belongs to the DEAD box helicase family.

The enzyme catalyses ATP + H2O = ADP + phosphate + H(+). Functionally, a probable DEAD-box RNA helicase that plays a role in ribosomal 50S subunit assembly. May be a non-specific RNA helicase. The polypeptide is Probable ATP-dependent RNA helicase YfmL (yfmL) (Bacillus subtilis (strain 168)).